Reading from the N-terminus, the 574-residue chain is 2-succinyl-5-enolpyruvyl-6-hydroxy-3-cyclohexene-1-carboxylate synthase (574 aa).

Belongs to the TPP enzyme family. MenD subfamily. As to quaternary structure, homodimer. It depends on Mg(2+) as a cofactor. Requires Mn(2+) as cofactor. Thiamine diphosphate serves as cofactor.

It carries out the reaction isochorismate + 2-oxoglutarate + H(+) = 5-enolpyruvoyl-6-hydroxy-2-succinyl-cyclohex-3-ene-1-carboxylate + CO2. It participates in quinol/quinone metabolism; 1,4-dihydroxy-2-naphthoate biosynthesis; 1,4-dihydroxy-2-naphthoate from chorismate: step 2/7. The protein operates within quinol/quinone metabolism; menaquinone biosynthesis. Catalyzes the thiamine diphosphate-dependent decarboxylation of 2-oxoglutarate and the subsequent addition of the resulting succinic semialdehyde-thiamine pyrophosphate anion to isochorismate to yield 2-succinyl-5-enolpyruvyl-6-hydroxy-3-cyclohexene-1-carboxylate (SEPHCHC). This chain is 2-succinyl-5-enolpyruvyl-6-hydroxy-3-cyclohexene-1-carboxylate synthase, found in Rubrobacter xylanophilus (strain DSM 9941 / JCM 11954 / NBRC 16129 / PRD-1).